The following is a 375-amino-acid chain: Trichodiene synthase (375 aa).

It belongs to the trichodiene synthase family.

It catalyses the reaction (2E,6E)-farnesyl diphosphate = trichodiene + diphosphate. Its pathway is sesquiterpene biosynthesis; trichothecene biosynthesis. Its function is as follows. TS is a member of the terpene cyclase group of enzymes. It catalyzes the isomerization and cyclization of farnesyl pyro-phosphate to form trichodiene, the first cyclic intermediate in the biosynthetic pathway for trichothecenes. It serves to branch trichothecene biosynthesis from the isoprenoid pathway. The sequence is that of Trichodiene synthase (TRI5) from Fusarium acaciae-mearnsii.